Reading from the N-terminus, the 341-residue chain is Tubulin-specific chaperone C (341 aa).

Methionine 1 carries the N-acetylmethionine modification. The span at 34 to 49 shows a compositional bias: basic and acidic residues; the sequence is ERQIEVERRKQKRQDQ. Residues 34 to 55 form a disordered region; the sequence is ERQIEVERRKQKRQDQEVEEEK. Serine 79 is modified (phosphoserine). A disordered region spans residues 148-173; that stretch reads TAQVDAAPVTSAAPSPPVTKEEEGAP. Residues 163–318 form the C-CAP/cofactor C-like domain; that stretch reads PPVTKEEEGA…NWDQVDDFNW (156 aa).

The protein belongs to the TBCC family. Supercomplex made of cofactors A to E. Cofactors A and D function by capturing and stabilizing tubulin in a quasi-native conformation. Cofactor E binds to the cofactor D-tubulin complex; interaction with cofactor C then causes the release of tubulin polypeptides that are committed to the native state.

It is found in the cytoplasm. Tubulin-folding protein; involved in the final step of the tubulin folding pathway. This Mus musculus (Mouse) protein is Tubulin-specific chaperone C (Tbcc).